A 473-amino-acid polypeptide reads, in one-letter code: MGVVGALSEVTSASEDALRLLISVLAGYPLAVVHRTFFYNKPAQHQHLFFVIVGLSLWMFNCGSSVIHPILSIFGAFFITNFMAGTDASIYAAHIVFLGHLLIGYWFHETDTYDITWTTPFCIMTLRFIGLVMDVYDGAQKPEHLKPDQKLTAISDKPGLLEIAAFGLFFQGTLVGPQFTLSKFRSFVNGDWLDSDGQPPKSAFLPSIGRFLAGCTYMVLHQWGQFWIPDQYFNSDAYNNLSFFWRWSWVTLWFRLTMYKYCAMWLITEGASILSGLGHNGKDAEGNDRWDGVRDLHIIKWETGHDYNSVVESFNCGTNTFAKNHIHRRLRWVNNKLASHVITLSYLAIWHGYHLGYFLLFGVELGCVQAQNQLYALIKRTPGWSEAISKPISRPFIWIFGKLTISYSMGFAFLMFGLIKTKYWIGPVKSLYFIGFIIYFIVWPILHMVLLRVLPRHPKKAAAEKPEEVKKEL.

4 consecutive transmembrane segments (helical) span residues 20-40 (LLIS…FFYN), 43-63 (AQHQ…FNCG), 66-86 (VIHP…MAGT), and 88-108 (ASIY…YWFH). Catalysis depends on residues Asn315 and His351. 3 helical membrane passes run 341-361 (VITL…FLLF), 396-416 (FIWI…FLMF), and 431-451 (LYFI…MVLL). Positions 470-473 (KKEL) match the Di-lysine motif motif.

This sequence belongs to the membrane-bound acyltransferase family.

The protein localises to the endoplasmic reticulum membrane. The enzyme catalyses a 1-acyl-sn-glycero-3-phosphocholine + an acyl-CoA = a 1,2-diacyl-sn-glycero-3-phosphocholine + CoA. The catalysed reaction is a 1-acyl-sn-glycero-3-phospho-L-serine + an acyl-CoA = a 1,2-diacyl-sn-glycero-3-phospho-L-serine + CoA. It carries out the reaction a 1-acyl-sn-glycero-3-phosphoethanolamine + an acyl-CoA = a 1,2-diacyl-sn-glycero-3-phosphoethanolamine + CoA. It participates in lipid metabolism; phospholipid metabolism. Its function is as follows. Probable acyltransferase which may mediate the conversion of lysophosphatidylcholine (1-acyl-sn-glycero-3-phosphocholine or LPC) into phosphatidylcholine (1,2-diacyl-sn-glycero-3-phosphocholine or PC) (LPCAT activity). May also catalyze the conversion of lysophosphatidylethanolamine (1-acyl-2-hydroxy-sn-glycero-3-phosphoethanolamine or LPE) into phosphatidylethanolamine (1,2-diacyl-sn-glycero-3-phosphoethanolamine or PE) (LPEAT activity), as well as the conversion of lysophosphatidylserine (1-acyl-2-hydroxy-sn-glycero-3-phospho-L-serine or LPS) into phosphatidylserine (1,2-diacyl-sn-glycero-3-phospho-L-serine or PS) (LPSAT activity). Required for incorporation of arachidonic acid into PC, PE, and PS. In Caenorhabditis elegans, this protein is Lysophospholipid acyltransferase 5 (mboa-6).